The chain runs to 309 residues: Acetylglutamate kinase (309 aa).

Residues 82-83 (GG), R104, and N206 each bind substrate.

The protein belongs to the acetylglutamate kinase family. ArgB subfamily.

The protein resides in the cytoplasm. The enzyme catalyses N-acetyl-L-glutamate + ATP = N-acetyl-L-glutamyl 5-phosphate + ADP. Its pathway is amino-acid biosynthesis; L-arginine biosynthesis; N(2)-acetyl-L-ornithine from L-glutamate: step 2/4. Catalyzes the ATP-dependent phosphorylation of N-acetyl-L-glutamate. This Cupriavidus metallidurans (strain ATCC 43123 / DSM 2839 / NBRC 102507 / CH34) (Ralstonia metallidurans) protein is Acetylglutamate kinase.